A 156-amino-acid chain; its full sequence is Small ribosomal subunit protein uS7c (156 aa).

This sequence belongs to the universal ribosomal protein uS7 family. Part of the 30S ribosomal subunit.

It is found in the plastid. The protein localises to the chloroplast. Its function is as follows. One of the primary rRNA binding proteins, it binds directly to 16S rRNA where it nucleates assembly of the head domain of the 30S subunit. The chain is Small ribosomal subunit protein uS7c (rps7) from Bowenia serrulata (Byfield fern).